The primary structure comprises 243 residues: Adenylate dimethylallyltransferase (243 aa).

This sequence belongs to the isopentenyl transferase family.

It carries out the reaction dimethylallyl diphosphate + AMP = N(6)-(dimethylallyl)adenosine 5'-phosphate + diphosphate. Its function is as follows. Transfers dimethylallyl groups to AMP as part of the biosynthesis of cytokinin phytohormones. This Rhizobium rhizogenes (Agrobacterium rhizogenes) protein is Adenylate dimethylallyltransferase (tzs).